Here is a 446-residue protein sequence, read N- to C-terminus: MVLYRRWGTEKDFVSTYTSSIDSDKEIVEEVKVVMKAHVIELYLSGYITKDTAKRILLAINSFHELKEGYEDIHEALEDHIIKTVGEEGGWVGFGRSRNDHVATALRLKMRKYLIEILYDIISLRKTLIEKSKTSTEILFPTYTHFQPAQPSTLAHYFLYIEDELDTIWNYIYSSLLLVNRSPLGSGAIVGTNVKLDRKREAELLGFDDIIYNTISATSSRLDLINAVSNLSLLMLFFSRIAEDLILLSSMFINIVKLPDSHVSTSSLMPQKRNAVTLEILRSKAGECFGDLSSLFNIYKGLPSGYNLDLQEMNKHYWDCVKIVNSSIEVINSILEGIEVLNFQLDDKTTATDVAEDLAITGIPYRKAYMEVANKIRAGTFISEISPKTSIYKKAVIGSPNPELINEEIKIKENRIAEEESKLKKYEEKIIGKMNELKVIEDDLIL.

The protein belongs to the lyase 1 family. Argininosuccinate lyase subfamily.

The protein resides in the cytoplasm. The catalysed reaction is 2-(N(omega)-L-arginino)succinate = fumarate + L-arginine. It functions in the pathway amino-acid biosynthesis; L-arginine biosynthesis; L-arginine from L-ornithine and carbamoyl phosphate: step 3/3. The protein is Argininosuccinate lyase of Sulfurisphaera tokodaii (strain DSM 16993 / JCM 10545 / NBRC 100140 / 7) (Sulfolobus tokodaii).